A 559-amino-acid chain; its full sequence is Urocanate hydratase (559 aa).

NAD(+) is bound by residues 54-55 (GG), Q132, 178-180 (GMG), E198, R203, 244-245 (NA), 265-269 (QTSAH), 275-276 (YL), and Y324. C412 is a catalytic residue. Residue G494 participates in NAD(+) binding.

This sequence belongs to the urocanase family. NAD(+) is required as a cofactor.

The protein resides in the cytoplasm. It carries out the reaction 4-imidazolone-5-propanoate = trans-urocanate + H2O. Its pathway is amino-acid degradation; L-histidine degradation into L-glutamate; N-formimidoyl-L-glutamate from L-histidine: step 2/3. In terms of biological role, catalyzes the conversion of urocanate to 4-imidazolone-5-propionate. This Azotobacter vinelandii (strain DJ / ATCC BAA-1303) protein is Urocanate hydratase.